We begin with the raw amino-acid sequence, 274 residues long: Large ribosomal subunit protein uL2cz/uL2cy (274 aa).

Disordered regions lie at residues 1–22 and 223–274; these read MAIHLYKTSTPSTRNGAVDSQV and MNPV…RRTK.

This sequence belongs to the universal ribosomal protein uL2 family. Part of the 50S ribosomal subunit.

The protein resides in the plastid. It is found in the chloroplast. The protein is Large ribosomal subunit protein uL2cz/uL2cy (rpl2-A) of Phaseolus vulgaris (Kidney bean).